Consider the following 551-residue polypeptide: Cu(2+) suppressing and bleomycin sensitive protein 1 (551 aa).

Coiled-coil stretches lie at residues 174–213 (REIDNERKKNKIEEDLLLRAKLKHCKDEYDILEGKLEEID) and 249–300 (NSLL…DSGK). A disordered region spans residues 513–551 (EEKAQNSTSSDGSDDDDNGESGIDSNSNDSEPESEYQQE). Positions 532 to 541 (ESGIDSNSND) are enriched in low complexity. Residues 542–551 (SEPESEYQQE) show a composition bias toward acidic residues.

This sequence belongs to the CUB1 family. In terms of assembly, monomer. Phosphorylated by PKA in vitro.

It is found in the cytoplasm. Its subcellular location is the nucleus. Its function is as follows. Involved in bleomycin tolerance with links to DNA repair and/or proteasome function. The polypeptide is Cu(2+) suppressing and bleomycin sensitive protein 1 (CUB1) (Saccharomyces cerevisiae (strain ATCC 204508 / S288c) (Baker's yeast)).